The sequence spans 136 residues: Histone H3, embryonic (136 aa).

The disordered stretch occupies residues M1–R43. K5 is modified (N6-methylated lysine). K10 carries the N6-acetyllysine; alternate modification. The residue at position 10 (K10) is an N6-methylated lysine; alternate. S11 is subject to Phosphoserine. N6-acetyllysine occurs at positions 15 and 24. N6-methylated lysine is present on residues K28, K37, and K80.

This sequence belongs to the histone H3 family. In terms of assembly, the nucleosome is a histone octamer containing two molecules each of H2A, H2B, H3 and H4 assembled in one H3-H4 heterotetramer and two H2A-H2B heterodimers. The octamer wraps approximately 147 bp of DNA. Post-translationally, acetylation is generally linked to gene activation. In terms of processing, methylation at Lys-5 is linked to gene activation. Methylation at Lys-10 is linked to gene repression.

It is found in the nucleus. The protein localises to the chromosome. Its function is as follows. Core component of nucleosome. Nucleosomes wrap and compact DNA into chromatin, limiting DNA accessibility to the cellular machineries which require DNA as a template. Histones thereby play a central role in transcription regulation, DNA repair, DNA replication and chromosomal stability. DNA accessibility is regulated via a complex set of post-translational modifications of histones, also called histone code, and nucleosome remodeling. The chain is Histone H3, embryonic from Strongylocentrotus purpuratus (Purple sea urchin).